A 440-amino-acid chain; its full sequence is 5-hydroxytryptamine receptor 6 (440 aa).

The Extracellular portion of the chain corresponds to 1–27 (MVPEPGPSANSTPAWGAGPPSAPGGSG). The chain crosses the membrane as a helical span at residues 28-52 (WVAAALCVVIALTAAANSLLIALIC). Over 53–62 (TQPALRNTSN) the chain is Cytoplasmic. Residues 63–88 (FFLVSLFTSDLMVGLVVMPPAMLNAL) traverse the membrane as a helical segment. Over 89–96 (YGRWVLAR) the chain is Extracellular. Residues 97-122 (GLCLLWTAFDVMCCSASILNLCLISL) form a helical membrane-spanning segment. C99 and C180 are disulfide-bonded. A serotonin-binding site is contributed by D106. Residues 123–142 (DRYLLILSPLRYKLRMTPPR) lie on the Cytoplasmic side of the membrane. Residues 143-167 (ALALVLGAWSLAALASFLPLLLGWH) form a helical membrane-spanning segment. Topologically, residues 168–185 (ELGHARPPVPGQCRLLAS) are extracellular. The chain crosses the membrane as a helical span at residues 186–209 (LPFVLVASGLTFFLPSGAICFTYC). Over 210–266 (RILLAARKQAVQVASLTTGMASQASETLQVPRTPRPGVESADSRRLATKHSRKALKA) the chain is Cytoplasmic. Residues 267 to 293 (SLTLGILLGMFFVTWLPFFVANIVQAV) traverse the membrane as a helical segment. N288 contributes to the serotonin binding site. Topologically, residues 294–299 (CDCISP) are extracellular. Residues 300–323 (GLFDVLTWLGYCNSTMNPIIYPLF) traverse the membrane as a helical segment. The Cytoplasmic segment spans residues 324–440 (MRDFKRALGR…RPHPLGIPTN (117 aa)). A disordered region spans residues 346-392 (ASLASPSLRTSHSGPRPGLSLQQVLPLPLPPDSDSDSDAGSGGSSGL). The segment covering 347-358 (SLASPSLRTSHS) has biased composition (polar residues). Residues 362-371 (PGLSLQQVLP) show a composition bias toward low complexity.

Belongs to the G-protein coupled receptor 1 family. As to quaternary structure, interacts with MTOR, RPTOR and NF1. Interacts with CDK5.

Its subcellular location is the cell membrane. Its function is as follows. G-protein coupled receptor for 5-hydroxytryptamine (serotonin), a biogenic hormone that functions as a neurotransmitter, a hormone and a mitogen. Also has a high affinity for tricyclic psychotropic drugs. Ligand binding causes a conformation change that triggers signaling via guanine nucleotide-binding proteins (G proteins) and modulates the activity of downstream effectors. HTR6 is coupled to G(s) G alpha proteins and mediates activation of adenylate cyclase activity. Controls pyramidal neurons migration during corticogenesis, through the regulation of CDK5 activity. Is an activator of mTOR signaling. The sequence is that of 5-hydroxytryptamine receptor 6 (HTR6) from Pan troglodytes (Chimpanzee).